The following is a 90-amino-acid chain: Small ribosomal subunit protein bS20 (90 aa).

The tract at residues 1–29 is disordered; sequence MANTASAEKRNRQAQKRRARNVQVRTGVK.

This sequence belongs to the bacterial ribosomal protein bS20 family.

In terms of biological role, binds directly to 16S ribosomal RNA. This chain is Small ribosomal subunit protein bS20, found in Anaeromyxobacter sp. (strain Fw109-5).